The chain runs to 399 residues: Homoserine O-acetyltransferase (399 aa).

Positions 63 to 372 (NAILVCHALT…TDRGHDAFLL (310 aa)) constitute an AB hydrolase-1 domain. S168 functions as the Nucleophile in the catalytic mechanism. Substrate is bound at residue R238. Residues D334 and H367 contribute to the active site. Residue D368 coordinates substrate.

The protein belongs to the AB hydrolase superfamily. MetX family. In terms of assembly, homodimer.

It is found in the cytoplasm. It carries out the reaction L-homoserine + acetyl-CoA = O-acetyl-L-homoserine + CoA. The protein operates within amino-acid biosynthesis; L-methionine biosynthesis via de novo pathway; O-acetyl-L-homoserine from L-homoserine: step 1/1. Functionally, transfers an acetyl group from acetyl-CoA to L-homoserine, forming acetyl-L-homoserine. In Nitrobacter hamburgensis (strain DSM 10229 / NCIMB 13809 / X14), this protein is Homoserine O-acetyltransferase.